Here is a 1518-residue protein sequence, read N- to C-terminus: WD repeat-containing protein 62 (1518 aa).

Ala2 is modified (N-acetylalanine). Ser33 bears the Phosphoserine mark. Thr46 carries the post-translational modification Phosphothreonine. Ser49 is modified (phosphoserine). At Thr50 the chain carries Phosphothreonine. Ser52 bears the Phosphoserine mark. WD repeat units follow at residues 109 to 150 (TARK…QVAE), 153 to 194 (GHKY…VVAS), 196 to 234 (KVSCRVIALSFSEDSSYFVTVGNRHVRFWFLEVSTETKV), 291 to 330 (INLKVSLSSCLCVSQELIFCGCTDGIVRIFQAHSLHYLAN), 357 to 396 (AVYPDTVALTFDPIHQWLSCVYKDHSIYIWDVKDINRVGK), 402 to 450 (FHSS…DSHW), 490 to 529 (DVKAGVRVMQVSPDGQHLASGDRSGNLRIHELHFMDELVK), 532 to 574 (AHDA…NLEQ), 578 to 618 (DHSS…DGLH), 626 to 665 (AEKTTLYDMDIDITQKYVAVACQDRNVRVYNTVNGKQKKC), 671 to 713 (GDEG…KMFG), and 714 to 752 (HSEIITSMKFTYDCHHLITVSGDSCVFIWHLGPEITNCM). A Phosphoserine modification is found at Ser501. A compositionally biased stretch (basic and acidic residues) spans 762–772 (RQQQQHTNDKK). 2 disordered regions span residues 762–824 (RQQQ…DPDP) and 908–935 (ASLLSESESPQEAGRGHPSFLPQQKESS). The span at 781 to 790 (TYVSTPSEIH) shows a compositional bias: polar residues. Over residues 797-809 (QTEDDLEEECEPE) the composition is skewed to acidic residues. The WD 13 repeat unit spans residues 803–846 (EEECEPEEMLKTPSKDSLDPDPRCLLTNGKLPLWAKRLLGDDDV). Residues 810–824 (EMLKTPSKDSLDPDP) show a composition bias toward basic and acidic residues. Positions 908–920 (ASLLSESESPQEA) are enriched in low complexity. At Ser944 the chain carries Phosphoserine. The segment at 962–1055 (EVEAGPGDQQ…PSSSLPQTPE (94 aa)) is disordered. 2 stretches are compositionally biased toward polar residues: residues 971 to 981 (QGDSYLRVSSD) and 1045 to 1054 (VPSSSLPQTP). Residue Thr1053 is modified to Phosphothreonine. 8 positions are modified to phosphoserine: Ser1070, Ser1093, Ser1101, Ser1123, Ser1144, Ser1228, Ser1248, and Ser1249. A WD 14 repeat occupies 1132 to 1173 (GGSQPRAGTGYASPDRTHVLAAGKAEETLEAWRPPPPCLTSL). The stretch at 1255 to 1293 (SLGQELQAITTATTPSLDSEGQEPALRSWGNHEARANLR) is one WD 15 repeat. Thr1268 is subject to Phosphothreonine. The disordered stretch occupies residues 1339-1377 (FRPSLPAPESPGLPAHPSNPQLPEARPGIPGGTASLLEP).

As to quaternary structure, can form homodimers (via C-terminus). Interacts (via C-terminus) with MAPKBP1 (via C-terminus). Interacts with CDK5RAP2, CEP152, CEP63 and KIAA0753. CEP63, CDK5RAP2, CEP152, WDR62 are proposed to form a stepwise assembled complex at the centrosome forming a ring near parental centrioles. As to expression, present in fetal brain, enriched within the ventricular and subventricular zone (at protein level). In the embryonic brain it is expressed in mitotic neural precursor cells.

The protein localises to the nucleus. It is found in the cytoplasm. Its subcellular location is the cytoskeleton. The protein resides in the spindle pole. It localises to the microtubule organizing center. The protein localises to the centrosome. It is found in the centriole. In terms of biological role, required for cerebral cortical development. Plays a role in neuronal proliferation and migration. Plays a role in mother-centriole-dependent centriole duplication; the function also seems to involve CEP152, CDK5RAP2 and CEP63 through a stepwise assembled complex at the centrosome that recruits CDK2 required for centriole duplication. The chain is WD repeat-containing protein 62 (WDR62) from Homo sapiens (Human).